A 466-amino-acid polypeptide reads, in one-letter code: Glutamate--tRNA ligase (466 aa).

Positions 10–20 match the 'HIGH' region motif; sequence PSPTGALHIGG. Residues Cys99, Cys101, Cys126, and Asp128 each coordinate Zn(2+). The 'KMSKS' region motif lies at 239–243; it reads KLSKR. Lys242 is an ATP binding site.

It belongs to the class-I aminoacyl-tRNA synthetase family. Glutamate--tRNA ligase type 1 subfamily. In terms of assembly, monomer. Requires Zn(2+) as cofactor.

Its subcellular location is the cytoplasm. The catalysed reaction is tRNA(Glu) + L-glutamate + ATP = L-glutamyl-tRNA(Glu) + AMP + diphosphate. Functionally, catalyzes the attachment of glutamate to tRNA(Glu) in a two-step reaction: glutamate is first activated by ATP to form Glu-AMP and then transferred to the acceptor end of tRNA(Glu). The sequence is that of Glutamate--tRNA ligase from Pelagibacter ubique (strain HTCC1062).